Reading from the N-terminus, the 273-residue chain is MKKTQTWIITCIYLQLLLFNPLVKTKEICGNPVTDNVKDITKLVANLPNDYMITLNYVAGMDVLPSHCWLRDMVIQLSLSLTTLLDKFSNISEGLSNYSIIDKLGKIVDDLVLCMEENAPKNIKESPKRPETRSFTPEEFFSIFNRSIDAFKDFMVASDTSDCVLSSTLGPEKDSRVSVTKPFMLPPVAASSLRNDSSSSNRKAAKAPEDSGLQWTAMALPALISLVIGFAFGALYWKKKQSSLTRAVENIQINEEDNEISMLQQKEREFQEV.

Residues 1–25 form the signal peptide; sequence MKKTQTWIITCIYLQLLLFNPLVKT. The Extracellular segment spans residues 26 to 214; that stretch reads KEICGNPVTD…AKAPEDSGLQ (189 aa). Intrachain disulfides connect Cys29–Cys114 and Cys68–Cys163. N-linked (GlcNAc...) asparagine glycans are attached at residues Asn90, Asn97, Asn145, and Asn195. A disordered region spans residues 190–210; sequence ASSLRNDSSSSNRKAAKAPED. The segment covering 191–202 has biased composition (low complexity); sequence SSLRNDSSSSNR. Residues 215-237 traverse the membrane as a helical segment; the sequence is WTAMALPALISLVIGFAFGALYW. Topologically, residues 238–273 are cytoplasmic; sequence KKKQSSLTRAVENIQINEEDNEISMLQQKEREFQEV.

This sequence belongs to the SCF family. In terms of assembly, homodimer, non-covalently linked. Heterotetramer with KIT, binding two KIT molecules; thereby mediates KIT dimerization and subsequent activation by autophosphorylation. A soluble form is produced by proteolytic processing of isoform 1 in the extracellular domain. Expressed in the cochlea.

Its subcellular location is the cell membrane. It localises to the cytoplasm. The protein localises to the cytoskeleton. The protein resides in the cell projection. It is found in the lamellipodium. Its subcellular location is the filopodium. It localises to the secreted. Ligand for the receptor-type protein-tyrosine kinase KIT. Plays an essential role in the regulation of cell survival and proliferation, hematopoiesis, stem cell maintenance, gametogenesis, mast cell development, migration and function, and in melanogenesis. KITLG/SCF binding can activate several signaling pathways. Promotes phosphorylation of PIK3R1, the regulatory subunit of phosphatidylinositol 3-kinase, and subsequent activation of the kinase AKT1. KITLG/SCF and KIT also transmit signals via GRB2 and activation of RAS, RAF1 and the MAP kinases MAPK1/ERK2 and/or MAPK3/ERK1. KITLG/SCF and KIT promote activation of STAT family members STAT1, STAT3 and STAT5. KITLG/SCF and KIT promote activation of PLCG1, leading to the production of the cellular signaling molecules diacylglycerol and inositol 1,4,5-trisphosphate. KITLG/SCF acts synergistically with other cytokines, probably interleukins. This Mus musculus (Mouse) protein is Kit ligand (Kitlg).